Here is a 70-residue protein sequence, read N- to C-terminus: Large ribosomal subunit protein bL31 (70 aa).

Zn(2+) contacts are provided by cysteine 16, cysteine 18, cysteine 37, and cysteine 40.

This sequence belongs to the bacterial ribosomal protein bL31 family. Type A subfamily. In terms of assembly, part of the 50S ribosomal subunit. It depends on Zn(2+) as a cofactor.

In terms of biological role, binds the 23S rRNA. This chain is Large ribosomal subunit protein bL31, found in Psychromonas ingrahamii (strain DSM 17664 / CCUG 51855 / 37).